The following is a 256-amino-acid chain: MRLDGKTALITGSARGIGRAFAEAYVREGARVAIADINLEAARATAAEIGPAACAIALDVTDQASIDRCVAELLDRWGSIDILVNNAALFDLAPIVEITRESYDRLFAINVSGTLFMMQAVARAMIAGGRGGKIINMASQAGRRGEALVGVYCATKAAVISLTQSAGLNLIRHGINVNAIAPGVVDGEHWDGVDAKFADYENLPRGEKKRQVGAAVPFGRMGRAEDLTGMAIFLATPEADYIVAQTYNVDGGNWMS.

NAD(+)-binding positions include 15-17 (RGI), D36, 59-60 (DV), N86, Y152, K156, and 182-187 (PGVVDG). The Proton acceptor role is filled by Y152.

This sequence belongs to the short-chain dehydrogenases/reductases (SDR) family. Homodimer. May function as a tetramer in vivo.

The enzyme catalyses keto-D-fructose + NADH + H(+) = D-sorbitol + NAD(+). The catalysed reaction is galactitol + NAD(+) = keto-D-tagatose + NADH + H(+). It catalyses the reaction L-iditol + NAD(+) = keto-L-sorbose + NADH + H(+). With respect to regulation, inhibited by DTT, N-bromosuccinimide and iodoacetic acid. Functionally, catalyzes the oxidation of D-sorbitol (D-glucitol) to D-fructose. Can also catalyze the oxidation of galactitol to D-tagatose and the oxidation of L-iditol, with lower efficiency. The protein is Sorbitol dehydrogenase (polS) of Cereibacter sphaeroides (Rhodobacter sphaeroides).